Reading from the N-terminus, the 238-residue chain is Phosphoglycolate phosphatase (238 aa).

Residue D8 is the Nucleophile of the active site. The Mg(2+) site is built by D8 and D10. Residue K163 coordinates substrate. D186 and D190 together coordinate Mg(2+).

This sequence belongs to the archaeal SPP-like hydrolase family. Requires Mg(2+) as cofactor.

It carries out the reaction 2-phosphoglycolate + H2O = glycolate + phosphate. Catalyzes the dephosphorylation of 2-phosphoglycolate. The sequence is that of Phosphoglycolate phosphatase from Staphylothermus marinus (strain ATCC 43588 / DSM 3639 / JCM 9404 / F1).